Consider the following 368-residue polypeptide: Cyclin-dependent kinase 2 (368 aa).

One can recognise a Protein kinase domain in the interval 45 to 330 (FCSLRRIGEG…AKGALSHRYF (286 aa)). ATP-binding positions include 51–59 (IGEGTYGVV) and lysine 74. Aspartate 170 serves as the catalytic Proton acceptor. Mg(2+) is bound by residues asparagine 175 and aspartate 188.

This sequence belongs to the protein kinase superfamily. CMGC Ser/Thr protein kinase family. CDC2/CDKX subfamily. As to quaternary structure, interacts with cye-1; the interaction likely regulates cdk-2 activity and is probably required for gld-1 phosphorylation. The cofactor is Mg(2+).

It catalyses the reaction L-seryl-[protein] + ATP = O-phospho-L-seryl-[protein] + ADP + H(+). The catalysed reaction is L-threonyl-[protein] + ATP = O-phospho-L-threonyl-[protein] + ADP + H(+). Serine/threonine-protein kinase which, in association with cye-1, regulates proliferation, quiescent state and cell fate during the development of several cell lineages. In the embryo, initiates the establishment of cell polarity through the recruitment of the centrosomal proteins spd-2 and spd-5 during prophase. Phosphorylation and inhibition of the translational repressor gld-1 by the cdk-2/cye-1 complex regulates the pool of germline stem cells and the size of the mitotic zone in the gonads by preventing entry into meiosis. In Caenorhabditis elegans, this protein is Cyclin-dependent kinase 2.